The primary structure comprises 1600 residues: Eukaryotic translation initiation factor 4 gamma 1 (1600 aa).

A disordered region spans residues 1 to 88; sequence MNKAPQPTGP…ARPGPAPHVY (88 aa). The segment covering 7–24 has biased composition (pro residues); it reads PTGPPPARSPGLPQPAFP. Ser15 is subject to Phosphoserine. Residues 34–48 are compositionally biased toward polar residues; that stretch reads STPQATQMNTPSQPR. The segment covering 60–79 has biased composition (low complexity); sequence PSRAQPPSSAASRVQSAAPA. 2 positions are modified to omega-N-methylarginine: Arg80 and Arg117. 5 disordered regions span residues 173-230, 243-326, 366-501, 507-526, and 541-606; these read NQPP…NGES, SQGA…LSPE, ETHE…QLSQ, AATQ…KELN, and VDPA…DQWK. Residues 179-207 are PABPC1-binding; sequence APKRERKTIRIRDPNQGGKDITEEIMSGA. The segment covering 208–220 has biased composition (polar residues); the sequence is RTASTPTPPQTGG. A Phosphothreonine modification is found at Thr214. Ser230 carries the phosphoserine modification. Over residues 269 to 280 the composition is skewed to pro residues; that stretch reads SPSPTPSPPPIL. Phosphoserine is present on Ser324. Low complexity predominate over residues 438-449; the sequence is KVSSAALASILS. The segment covering 463-479 has biased composition (acidic residues); that stretch reads QEEEMEEDDDDEEGGEA. Positions 551–562 are enriched in polar residues; the sequence is QPPTGSNPSPES. Basic and acidic residues-rich tracts occupy residues 578–587 and 596–606; these read WDSKEDKIHN and QKYEYKSDQWK. Residue Lys606 is modified to N6-acetyllysine. The segment at 611-622 is EIF4E-binding; sequence EEKKRYDREFLL. Phosphothreonine is present on Thr651. Disordered regions lie at residues 667-719 and 734-760; these read GPDF…TRKI and AEKA…DGSK. The segment at 686-1089 is eIF3/EIF4A-binding; it reads GPPRGGPGGE…GSIDSNNQLF (404 aa). Residues Arg689 and Arg698 each carry the omega-N-methylarginine modification. A compositionally biased stretch (low complexity) spans 697-707; the sequence is PRGPAGLGPRR. Positions 745-760 are enriched in basic and acidic residues; the sequence is TAADKDRGEEDADGSK. One can recognise an MIF4G domain in the interval 765-993; the sequence is FRRVRSILNK…QDVLDLRQSN (229 aa). Disordered regions lie at residues 1029-1117 and 1129-1238; these read AKGS…SEAT and QQTL…AALS. Ser1032 carries the phosphoserine modification. Omega-N-methylarginine is present on residues Arg1036 and Arg1046. A phosphoserine mark is found at Ser1081 and Ser1096. Position 1099 is an N6-acetyllysine (Lys1099). A phosphoserine mark is found at Ser1147 and Ser1149. Residues 1148 to 1180 are compositionally biased toward basic and acidic residues; the sequence is LSRERGEKAGDRGDRLERSERGGDRGDRLDRAR. At Ser1187 the chain carries Phosphoserine; by PKC/PRKCA. Over residues 1188 to 1225 the composition is skewed to basic and acidic residues; it reads FSKEVEERSRERPSQPEGLRKAASLTEDRGRDPVKREA. Residues Ser1189, Ser1196, and Ser1211 each carry the phosphoserine modification. The residue at position 1213 (Thr1213) is a Phosphothreonine. Phosphoserine occurs at positions 1231 and 1238. In terms of domain architecture, MI spans 1241–1363; that stretch reads EVEKKSKAII…PMGELFREIT (123 aa). A W2 domain is found at 1429-1599; the sequence is ESEAPGQRTL…REAEDEESDH (171 aa). Residues 1450 to 1600 are EIF4A-binding; the sequence is LLKDGGSNQR…EAEDEESDHN (151 aa). The tract at residues 1585-1600 is necessary but not sufficient for MKNK1-binding; it reads FFNWLREAEDEESDHN. Residue Ser1597 is modified to Phosphoserine.

This sequence belongs to the eukaryotic initiation factor 4G family. As to quaternary structure, eIF4F is a multi-subunit complex, the composition of which varies with external and internal environmental conditions. It is composed of at least EIF4A, EIF4E (cap-binding) and EIF4G1/EIF4G3. Interacts with eIF3 complex, mutually exclusive with EIF4A1 or EIF4A2, EIF4E and through its N-terminus with PABPC1. Interacts with EIF4E or with EIF1 (mutually exclusive) through a common binding site. Interacts through its C-terminus with the serine/threonine kinases MKNK1, and with MKNK2. Appears to act as a scaffold protein, holding these enzymes in place to phosphorylate EIF4E. Non-phosphorylated EIF4EBP1 competes with EIF4G1/EIF4G3 to interact with EIF4E; insulin stimulated MAP-kinase (MAPK1 and MAPK3) phosphorylation of EIF4EBP1 causes dissociation of the complex allowing EIF4G1/EIF4G3 to bind and consequent initiation of translation. EIF4G1/EIF4G3 interacts with PABPC1 to bring about circularization of the mRNA. Interacts with EIF4E3. Interacts with CIRBP and MIF4GD. Interacts with RBM4. Interacts with HNRNPD/AUF1; the interaction requires RNA. Interacts with DDX3X; the interaction requires RNA. Interacts with DAZAP2. In terms of assembly, (Microbial infection) Interacts with murine norovirus viral genome-linked protein (via C-terminus); this interaction plays a role in translation of viral proteins. Post-translationally, phosphorylated at multiple sites in vivo. Phosphorylation at Ser-1187 by PRKCA induces binding to MKNK1.

It is found in the cytoplasm. It localises to the nucleus. The protein localises to the stress granule. In terms of biological role, component of the protein complex eIF4F, which is involved in the recognition of the mRNA cap, ATP-dependent unwinding of 5'-terminal secondary structure and recruitment of mRNA to the ribosome. Exists in two complexes, either with EIF1 or with EIF4E (mutually exclusive). Together with EIF1, is required for leaky scanning, in particular for avoiding cap-proximal start codon. Together with EIF4E, antagonizes the scanning promoted by EIF1-EIF4G1 and locates the start codon (through a TISU element) without scanning. As a member of the eIF4F complex, required for endoplasmic reticulum stress-induced ATF4 mRNA translation. The chain is Eukaryotic translation initiation factor 4 gamma 1 (Eif4g1) from Mus musculus (Mouse).